Consider the following 162-residue polypeptide: Tegument protein BLRF2 (162 aa).

Positions V12–G43 form a coiled coil. The disordered stretch occupies residues G121 to D162. The span at R151–D162 shows a compositional bias: basic and acidic residues.

This sequence belongs to the herpesviridae BLRF2 family. As to quaternary structure, homooligomer; homooligomerizes and binds double-stranded DNA (dsDNA) cooperatively. Interacts with host CGAS.

Its subcellular location is the virion tegument. It localises to the host cytoplasm. In terms of biological role, plays a role in the inhibition of host innate immune system by targeting the CGAS enzymatic activity which is the principal cytosolic DNA sensor that detects invading viral DNA. Acts by inhibiting CGAS-DNA phase separation: directly binds double-stranded DNA (dsDNA) in a length dependent but sequence independent manner and is able to form DNA-induced phase separation in infected cells. DNA phase separation of ORF52 mediates disruption of liquid-like droplets in which CGAS is activated, thereby preventing CGAS activity. The chain is Tegument protein BLRF2 from Epstein-Barr virus (strain GD1) (HHV-4).